A 635-amino-acid chain; its full sequence is Probable retaining alpha-galactosidase (635 aa).

The first 30 residues, 1–30 (MARSVRRTTLALLLSAVLAMTLFVTAPAHA), serve as a signal peptide directing secretion. Residue Asp-179 coordinates Ca(2+). The active-site Nucleophile is Asp-397. Glu-446 and Glu-452 together coordinate Ca(2+). Glu-452 (proton donor/acceptor) is an active-site residue.

Belongs to the glycosyl hydrolase 97 family. Requires Ca(2+) as cofactor.

It carries out the reaction Hydrolysis of terminal, non-reducing alpha-D-galactose residues in alpha-D-galactosides, including galactose oligosaccharides, galactomannans and galactolipids.. The sequence is that of Probable retaining alpha-galactosidase from Streptomyces bingchenggensis (strain BCW-1).